The chain runs to 27 residues: uncharacterized protein (27 aa).

It is found in the mitochondrion. This is an uncharacterized protein from Emericella nidulans (Aspergillus nidulans).